The sequence spans 113 residues: U11-theraphotoxin-Hhn1s (113 aa).

Residues 1–21 (MNTVRVTFLLVFVLAVSLGQA) form the signal peptide. A propeptide spanning residues 22 to 74 (DKDENRMEMQEKTEQGKSYLDFAENLLLQKLEELEAKLLEEDSEESRNSRQKR) is cleaved from the precursor. The segment at 61–83 (EEDSEESRNSRQKRCIGEGVPCD) is disordered. Intrachain disulfides connect C75–C90, C82–C95, and C89–C110.

It belongs to the neurotoxin 14 (magi-1) family. 01 (HNTX-16) subfamily. As to expression, expressed by the venom gland.

Its subcellular location is the secreted. Its function is as follows. Probable ion channel inhibitor. This Cyriopagopus hainanus (Chinese bird spider) protein is U11-theraphotoxin-Hhn1s.